The chain runs to 59 residues: Anti-inflammatory peptide amregulin (59 aa).

The signal sequence occupies residues Met1 to Gly19.

As to expression, salivary glands.

The protein resides in the secreted. In terms of biological role, anti-inflammatory peptide that may facilitate successful blood feeding of ticks and may lead to immunotolerance in its host. Inhibits the secretion of inflammatory factors in rat splenocytes, such as tumor necrosis factor-alpha (TNF), interleukin-1, interleukin-8 (CXCL8) and interferon-gamma (IFNG). In addition, shows strong free radical scavenging and antioxidant activities in vitro. In vivo, inhibits adjuvant-induced paw inflammation in mouse models. The sequence is that of Anti-inflammatory peptide amregulin from Amblyomma variegatum (Tropical bont tick).